The following is a 656-amino-acid chain: Protein O1 homolog (656 aa).

A helical membrane pass occupies residues Phe544–Ile564.

It belongs to the chordopoxvirinae O1 family.

It localises to the membrane. This Vertebrata (FPV) protein is Protein O1 homolog.